We begin with the raw amino-acid sequence, 555 residues long: MLKKIDPAQTESWKRLGRHYDGVKDLAMDDLFQQDPDRFKRLSMAFKDMVVDVSKNRITDKTLALLMDLARETGVKEAIAMMFRGDRINETEGRSVLHVALRNLADTPVLVDGKDVMPGVRGVLEQMRLFSTRVYSGQQTGYSNRTITDIVNIGIGGSDLGPKMVATALAPYARKGLNVHFVSNVDGTHIVETLKGLDPATTLFIIASKTFTTQETMTNAASARQWFLEGAGDPGHVAQHFVAISTNAAAVEAFGIDRDNMFGFWDWVGGRYSLWSAIGLSVACYIGFDNFKRLLKGGFDMDCHFRDTPLEQNIPVVLAMISIWYVNFFNFPTEAVLPYDQGLEYFPAYLQQACMESNGKSTDRNGNLVAHATSPIVWGEPGTNGQHAFYQLLHQGTQIVPCDFLVPAISHNPLGDHHALLVANCFAQAEALMKGRGEQEVTREMTAKGMDGEKLGRLLPHRVFHGNRPSNTIVFKQLTPEVLGAIIAMYEHKIFVQGVVWNIFSFDQWGVELGKALASQIFPELADHETVVTHDGSTNGLINVFKQMRSKTCRS.

The Proton donor role is filled by Glu356. Active-site residues include His387 and Lys515.

Belongs to the GPI family.

It localises to the cytoplasm. The enzyme catalyses alpha-D-glucose 6-phosphate = beta-D-fructose 6-phosphate. It functions in the pathway carbohydrate biosynthesis; gluconeogenesis. The protein operates within carbohydrate degradation; glycolysis; D-glyceraldehyde 3-phosphate and glycerone phosphate from D-glucose: step 2/4. In terms of biological role, catalyzes the reversible isomerization of glucose-6-phosphate to fructose-6-phosphate. This chain is Glucose-6-phosphate isomerase, found in Desulforapulum autotrophicum (strain ATCC 43914 / DSM 3382 / VKM B-1955 / HRM2) (Desulfobacterium autotrophicum).